Here is an 825-residue protein sequence, read N- to C-terminus: Translation initiation factor IF-2 (825 aa).

4 stretches are compositionally biased toward basic and acidic residues: residues 1-19, 35-45, 70-98, and 113-122; these read MTKK…DNKK, RKGEKKTEGKR, LLKD…EYKK, and KKVESVEKPA. Residues 1 to 239 form a disordered region; the sequence is MTKKQENETS…TQRKDRPLPE (239 aa). Residues 158-169 are compositionally biased toward low complexity; the sequence is PSSSRRPSSRPS. Basic residues predominate over residues 181–191; the sequence is GRRRKSGKPGR. Over residues 194-208 the composition is skewed to polar residues; it reads QNSYADQGRGANSNR. Basic residues predominate over residues 211–220; it reads QRKRKNKKHQ. One can recognise a tr-type G domain in the interval 326–495; it reads VRPPVVTIMG…ILEADMLELK (170 aa). Positions 335 to 342 are G1; that stretch reads GHVDHGKT. 335–342 provides a ligand contact to GTP; sequence GHVDHGKT. The interval 360–364 is G2; sequence GITQN. The tract at residues 381-384 is G3; it reads DTPG. Residues 381–385 and 435–438 contribute to the GTP site; these read DTPGH and NKMD. Positions 435–438 are G4; the sequence is NKMD. The segment at 471-473 is G5; it reads SAK.

This sequence belongs to the TRAFAC class translation factor GTPase superfamily. Classic translation factor GTPase family. IF-2 subfamily.

The protein localises to the cytoplasm. In terms of biological role, one of the essential components for the initiation of protein synthesis. Protects formylmethionyl-tRNA from spontaneous hydrolysis and promotes its binding to the 30S ribosomal subunits. Also involved in the hydrolysis of GTP during the formation of the 70S ribosomal complex. In Lactobacillus delbrueckii subsp. bulgaricus (strain ATCC BAA-365 / Lb-18), this protein is Translation initiation factor IF-2.